The sequence spans 557 residues: Dihydroxy-acid dehydratase (557 aa).

D78 lines the Mg(2+) pocket. Residue C119 participates in [2Fe-2S] cluster binding. Residues D120 and K121 each contribute to the Mg(2+) site. N6-carboxylysine is present on K121. A [2Fe-2S] cluster-binding site is contributed by C192. E446 is a Mg(2+) binding site. The Proton acceptor role is filled by S472.

It belongs to the IlvD/Edd family. Homodimer. The cofactor is [2Fe-2S] cluster. Mg(2+) is required as a cofactor.

It carries out the reaction (2R)-2,3-dihydroxy-3-methylbutanoate = 3-methyl-2-oxobutanoate + H2O. It catalyses the reaction (2R,3R)-2,3-dihydroxy-3-methylpentanoate = (S)-3-methyl-2-oxopentanoate + H2O. It participates in amino-acid biosynthesis; L-isoleucine biosynthesis; L-isoleucine from 2-oxobutanoate: step 3/4. It functions in the pathway amino-acid biosynthesis; L-valine biosynthesis; L-valine from pyruvate: step 3/4. Its function is as follows. Functions in the biosynthesis of branched-chain amino acids. Catalyzes the dehydration of (2R,3R)-2,3-dihydroxy-3-methylpentanoate (2,3-dihydroxy-3-methylvalerate) into 2-oxo-3-methylpentanoate (2-oxo-3-methylvalerate) and of (2R)-2,3-dihydroxy-3-methylbutanoate (2,3-dihydroxyisovalerate) into 2-oxo-3-methylbutanoate (2-oxoisovalerate), the penultimate precursor to L-isoleucine and L-valine, respectively. The sequence is that of Dihydroxy-acid dehydratase from Campylobacter curvus (strain 525.92).